The sequence spans 90 residues: Cell division topological specificity factor (90 aa).

This sequence belongs to the MinE family.

Its function is as follows. Prevents the cell division inhibition by proteins MinC and MinD at internal division sites while permitting inhibition at polar sites. This ensures cell division at the proper site by restricting the formation of a division septum at the midpoint of the long axis of the cell. The protein is Cell division topological specificity factor of Francisella tularensis subsp. tularensis (strain FSC 198).